Here is a 149-residue protein sequence, read N- to C-terminus: Aquaporin-like protein 2 (149 aa).

The segment at 1–35 (MSNESNDLEKNISHLDPTGVDNAYIPPEQPETKHS) is disordered. Residues 1–47 (MSNESNDLEKNISHLDPTGVDNAYIPPEQPETKHSRFNIDRDTLRNH) lie on the Cytoplasmic side of the membrane. A helical membrane pass occupies residues 48–68 (FIAAVGEFCGTFMFLWCAYVI). The Extracellular portion of the chain corresponds to 69–89 (CNVANHDVALTTEPEGSHPGQ). The chain crosses the membrane as a helical span at residues 90–110 (LIMIALGFGFSVMFSIWCFWW). At 111 to 149 (GFEPSRFSLFVFGQSHLSSQMCSDVVSSDHCWDGCWWCR) the chain is on the cytoplasmic side.

It belongs to the MIP/aquaporin (TC 1.A.8) family.

It is found in the endoplasmic reticulum membrane. The protein localises to the cell membrane. Its function is as follows. Water channel required to facilitate the transport of water across membranes. Involved in freeze tolerance, osmotolerance and cell flocculation in liquid cultures. Is non-functional in most laboratory strains. In Saccharomyces cerevisiae (strain RM11-1a) (Baker's yeast), this protein is Aquaporin-like protein 2 (AQY2-2).